The primary structure comprises 242 residues: Myogenic factor 6 (242 aa).

A disordered region spans residues 31 to 63 (SPLYPGSDGTLSPCQDQMPPEAGSDSSGEEHVL). The bHLH domain maps to 93-144 (DRRKAATLRERRRLKKINEAFEALKRRTVANPNQRLPKVEILRSAINYIERL).

As to quaternary structure, efficient DNA binding requires dimerization with another bHLH protein.

It is found in the nucleus. In terms of biological role, involved in muscle differentiation (myogenic factor). Induces fibroblasts to differentiate into myoblasts. Probable sequence specific DNA-binding protein. The sequence is that of Myogenic factor 6 (MYF6) from Sus scrofa (Pig).